The sequence spans 471 residues: L-lysine 2,3-aminomutase (471 aa).

In terms of domain architecture, Radical SAM core spans 120–332 (HRYPDRVLFL…GLRGHTSGYA (213 aa)). Positions 134, 138, and 141 each coordinate [4Fe-4S] cluster. Lys-346 carries the N6-(pyridoxal phosphate)lysine modification.

This sequence belongs to the radical SAM superfamily. KamA family. Homotetramer. [4Fe-4S] cluster serves as cofactor. The cofactor is pyridoxal 5'-phosphate.

It catalyses the reaction L-lysine = (3S)-3,6-diaminohexanoate. It functions in the pathway amino-acid degradation; L-lysine degradation via acetate pathway. Catalyzes the interconversion of L-alpha-lysine and L-beta-lysine. The polypeptide is L-lysine 2,3-aminomutase (kamA) (Bacillus subtilis (strain 168)).